A 522-amino-acid chain; its full sequence is Ribonuclease Y (522 aa).

Residues 7 to 23 (SGSSAAVISGLVGFYIS) traverse the membrane as a helical segment. The 67-residue stretch at 212-278 (LTNLVHLNDD…TKTLELLIQD (67 aa)) folds into the KH domain. The region spanning 338 to 431 (ALSHTLEVAH…VCAADALSAA (94 aa)) is the HD domain.

Belongs to the RNase Y family.

The protein localises to the cell membrane. Its function is as follows. Endoribonuclease that initiates mRNA decay. The sequence is that of Ribonuclease Y from Sulfurimonas denitrificans (strain ATCC 33889 / DSM 1251) (Thiomicrospira denitrificans (strain ATCC 33889 / DSM 1251)).